The sequence spans 597 residues: Probable translation initiation factor IF-2 (597 aa).

Residues Leu-13–Glu-229 form the tr-type G domain. A G1 region spans residues Gly-22–Thr-29. Gly-22–Thr-29 contributes to the GTP binding site. Residues Ala-47–His-51 form a G2 region. The segment at Asp-84–Gly-87 is G3. GTP is bound by residues Asp-84 to His-88 and Asn-138 to Asp-141. The tract at residues Asn-138 to Asp-141 is G4. A G5 region spans residues Ser-206–Val-208.

This sequence belongs to the TRAFAC class translation factor GTPase superfamily. Classic translation factor GTPase family. IF-2 subfamily.

In terms of biological role, function in general translation initiation by promoting the binding of the formylmethionine-tRNA to ribosomes. Seems to function along with eIF-2. The chain is Probable translation initiation factor IF-2 from Methanosarcina acetivorans (strain ATCC 35395 / DSM 2834 / JCM 12185 / C2A).